Consider the following 441-residue polypeptide: MAKQPGYQARSTNSGKGELKSRLLFVLGALIVYRIGSFIPVPGIDAAVLAQLVEQQKGTIIDMFNMFSGGALSRASILALGIMPYISASIVIQLLATVSPALAELKKEGAAGQRKISKYTRYATVVFATIQAVAISTGLPNMLSGLVPNVGFSFYFTSVVSLVTGTMFLMWLGEQITERGIGNGISILVFGGIVAGLPSAILQTIEQARQGQMHPLVLLLIAAIVFAVTYFVVFVERGQRRIRVEYAKRQQGRQILGGHSTHLPLKVNMANVMPAIFASSIILFPATLTQWFGQNDKFEWLNNLSMLLNPGQPLYLLVYAVAIIFFSFFYTAMQYNPRDTADNLKKSGAFIPGIRPGEQTSRYIDKVMTRLTLIGGLYVTFVCLVPYIMTSAWDVKFYFGGTSLLIVVVVIMDFIVQVQSHLMSSQYESALKKANLKGFGQ.

10 helical membrane-spanning segments follow: residues 24–44 (LFVLGALIVYRIGSFIPVPGI), 77–97 (ILALGIMPYISASIVIQLLAT), 123–143 (ATVVFATIQAVAISTGLPNML), 152–172 (FSFYFTSVVSLVTGTMFLMWL), 181–201 (IGNGISILVFGGIVAGLPSAI), 215–235 (PLVLLLIAAIVFAVTYFVVFV), 272–292 (VMPAIFASSIILFPATLTQWF), 313–333 (PLYLLVYAVAIIFFSFFYTAM), 373–393 (LIGGLYVTFVCLVPYIMTSAW), and 397–417 (FYFGGTSLLIVVVVIMDFIVQ).

This sequence belongs to the SecY/SEC61-alpha family. As to quaternary structure, component of the Sec protein translocase complex. Heterotrimer consisting of SecY, SecE and SecG subunits. The heterotrimers can form oligomers, although 1 heterotrimer is thought to be able to translocate proteins. Interacts with the ribosome. Interacts with SecDF, and other proteins may be involved. Interacts with SecA.

Its subcellular location is the cell inner membrane. The central subunit of the protein translocation channel SecYEG. Consists of two halves formed by TMs 1-5 and 6-10. These two domains form a lateral gate at the front which open onto the bilayer between TMs 2 and 7, and are clamped together by SecE at the back. The channel is closed by both a pore ring composed of hydrophobic SecY resides and a short helix (helix 2A) on the extracellular side of the membrane which forms a plug. The plug probably moves laterally to allow the channel to open. The ring and the pore may move independently. This Haemophilus influenzae (strain ATCC 51907 / DSM 11121 / KW20 / Rd) protein is Protein translocase subunit SecY.